A 174-amino-acid chain; its full sequence is UPF0316 protein LMOf2365_1801 (174 aa).

3 helical membrane-spanning segments follow: residues 4 to 24 (GIFIVATIFIVNILYVTIYTV), 36 to 56 (LAALSSVFEMIIYVVALSLVL), and 62 to 82 (IANVLAYAIGFGVGIIVGMKI).

It belongs to the UPF0316 family.

It is found in the cell membrane. This chain is UPF0316 protein LMOf2365_1801, found in Listeria monocytogenes serotype 4b (strain F2365).